A 301-amino-acid polypeptide reads, in one-letter code: Homeobox protein Hox-D13 (301 aa).

Disordered stretches follow at residues 1 to 20 (MDGLRGDSSGGGGGGGTPGQ) and 55 to 75 (GERSGAAARPDPPAKDCPGSG). Over residues 8-18 (SSGGGGGGGTP) the composition is skewed to gly residues. A DNA-binding region (homeobox) is located at residues 234-293 (GRKKRVPYTKLQLKELENEYAINKFINKDKRRRISAATNLSERQVTIWFQNRRVKDKKIV).

Belongs to the Abd-B homeobox family.

It is found in the nucleus. Sequence-specific transcription factor that binds gene promoters and activates their transcription. Part of a developmental regulatory system that provides cells with specific positional identities on the anterior-posterior axis. In Gallus gallus (Chicken), this protein is Homeobox protein Hox-D13 (HOXD13).